We begin with the raw amino-acid sequence, 365 residues long: Fructose-1,6-bisphosphatase class 1 2 (365 aa).

Mg(2+) contacts are provided by Glu-100, Asp-122, Leu-124, and Asp-125. Substrate is bound by residues Asp-125–Ser-128 and Asn-221. Position 293 (Glu-293) interacts with Mg(2+).

Belongs to the FBPase class 1 family. Homotetramer. Mg(2+) serves as cofactor.

Its subcellular location is the cytoplasm. The enzyme catalyses beta-D-fructose 1,6-bisphosphate + H2O = beta-D-fructose 6-phosphate + phosphate. It functions in the pathway carbohydrate biosynthesis; gluconeogenesis. The chain is Fructose-1,6-bisphosphatase class 1 2 from Cupriavidus metallidurans (strain ATCC 43123 / DSM 2839 / NBRC 102507 / CH34) (Ralstonia metallidurans).